Consider the following 370-residue polypeptide: Chaperone protein DnaJ (370 aa).

The J domain occupies 6–70; that stretch reads DYYEVLGVQR…EKRSMYDRFG (65 aa). Residues 128 to 208 form a CR-type zinc finger; the sequence is GVEKTIEFRR…CRGEGRVRQT (81 aa). Residues Cys-141, Cys-144, Cys-158, Cys-161, Cys-182, Cys-185, Cys-196, and Cys-199 each coordinate Zn(2+). 4 CXXCXGXG motif repeats span residues 141 to 148, 158 to 165, 182 to 189, and 196 to 203; these read CPACRGSG, CPKCGGLG, CDMCRGEG, and CRECRGEG.

This sequence belongs to the DnaJ family. As to quaternary structure, homodimer. The cofactor is Zn(2+).

Its subcellular location is the cytoplasm. Participates actively in the response to hyperosmotic and heat shock by preventing the aggregation of stress-denatured proteins and by disaggregating proteins, also in an autonomous, DnaK-independent fashion. Unfolded proteins bind initially to DnaJ; upon interaction with the DnaJ-bound protein, DnaK hydrolyzes its bound ATP, resulting in the formation of a stable complex. GrpE releases ADP from DnaK; ATP binding to DnaK triggers the release of the substrate protein, thus completing the reaction cycle. Several rounds of ATP-dependent interactions between DnaJ, DnaK and GrpE are required for fully efficient folding. Also involved, together with DnaK and GrpE, in the DNA replication of plasmids through activation of initiation proteins. The polypeptide is Chaperone protein DnaJ (Roseiflexus sp. (strain RS-1)).